The primary structure comprises 294 residues: Homeobox-leucine zipper protein ATHB-13 (294 aa).

A DNA-binding region (homeobox) is located at residues M82–Q141. The tract at residues L142–L177 is leucine-zipper. The disordered stretch occupies residues E181 to T246. Over residues S197–D210 the composition is skewed to low complexity. Residues A214–T223 show a composition bias toward polar residues.

It belongs to the HD-ZIP homeobox family. Class I subfamily. In terms of tissue distribution, predominantly expressed in leaves and flowers.

The protein resides in the nucleus. Probable transcription factor that may act in the sucrose-signaling pathway. This Arabidopsis thaliana (Mouse-ear cress) protein is Homeobox-leucine zipper protein ATHB-13 (ATHB-13).